The sequence spans 156 residues: Endogenous retrovirus group K member 25 Pro protein (156 aa).

The Peptidase A2 domain occupies 21–96; sequence FEGLVDTGAD…IPLNLWGRDL (76 aa). The active site involves aspartate 26. Residues 111–156 enclose the G-patch domain; it reads YSPTSQKIMTKMGYIPGKGLGKNEDGIKIPVEAKINQKREGIGYPF.

Belongs to the peptidase A2 family. HERV class-II K(HML-2) subfamily. In terms of assembly, active as a homodimer. In terms of processing, autoproteolytically processed at the N-terminus. Expected C-terminal autoprocessing not detected. The sequence shown is that of the processed Pro protein.

It catalyses the reaction Processing at the authentic HIV-1 PR recognition site and release of the mature p17 matrix and the p24 capsid protein, as a result of the cleavage of the -SQNY-|-PIVQ- cleavage site.. Functionally, retroviral proteases have roles in processing of the primary translation products and the maturation of the viral particle. Endogenous Pro proteins may have kept, lost or modified their original function during evolution. This endogenous protein has retained most of the characteristics of retroviral proteases. The sequence is that of Endogenous retrovirus group K member 25 Pro protein (ERVK-25) from Homo sapiens (Human).